The chain runs to 459 residues: Glycosyl hydrolase family 109 protein (459 aa).

Positions 1–31 (MHNIHRRNFLKAAGAATAGLVTANIALNAYA) form a signal peptide, tat-type signal. Residues 64 to 65 (ER), aspartate 86, 135 to 138 (WEWH), 155 to 156 (EV), and asparagine 184 each bind NAD(+). Substrate-binding positions include tyrosine 213, arginine 232, 244–247 (YPTH), and tyrosine 326. Tyrosine 244 is an NAD(+) binding site.

This sequence belongs to the Gfo/Idh/MocA family. Glycosyl hydrolase 109 subfamily. NAD(+) serves as cofactor. Predicted to be exported by the Tat system. The position of the signal peptide cleavage has not been experimentally proven.

Its function is as follows. Glycosidase. This Shewanella baltica (strain OS195) protein is Glycosyl hydrolase family 109 protein.